The primary structure comprises 103 residues: MKTITIPRQNLTQYEIMLIMRPDLPEEKFLKFLSEIKEHAKRNLALEFNLSNRGRRKLAYAMRKFQDGIYIQFNFLGSGYILNSLIKRLKLEESILRYIVQKT.

It belongs to the bacterial ribosomal protein bS6 family.

It localises to the plastid. Its subcellular location is the chloroplast. In terms of biological role, binds together with bS18 to 16S ribosomal RNA. The polypeptide is Small ribosomal subunit protein bS6c (rps6) (Cyanidium caldarium (Red alga)).